A 452-amino-acid polypeptide reads, in one-letter code: Ribosomal protein uS12 methylthiotransferase RimO (452 aa).

The 120-residue stretch at 3–122 (LTVGLISLGC…LPEIITQVMD (120 aa)) folds into the MTTase N-terminal domain. Positions 12, 48, 85, 162, 166, and 169 each coordinate [4Fe-4S] cluster. A Radical SAM core domain is found at 148–392 (LTPPHTAYIK…TLLLARLASE (245 aa)). Positions 395-452 (QEQIGRQIRVLVDAPGVARTEWDAPDIDGTVSVPLTLPVGQFATVTVTDAVAYELTAE) constitute a TRAM domain.

It belongs to the methylthiotransferase family. RimO subfamily. The cofactor is [4Fe-4S] cluster.

The protein resides in the cytoplasm. It carries out the reaction L-aspartate(89)-[ribosomal protein uS12]-hydrogen + (sulfur carrier)-SH + AH2 + 2 S-adenosyl-L-methionine = 3-methylsulfanyl-L-aspartate(89)-[ribosomal protein uS12]-hydrogen + (sulfur carrier)-H + 5'-deoxyadenosine + L-methionine + A + S-adenosyl-L-homocysteine + 2 H(+). In terms of biological role, catalyzes the methylthiolation of an aspartic acid residue of ribosomal protein uS12. This chain is Ribosomal protein uS12 methylthiotransferase RimO, found in Akkermansia muciniphila (strain ATCC BAA-835 / DSM 22959 / JCM 33894 / BCRC 81048 / CCUG 64013 / CIP 107961 / Muc).